The sequence spans 101 residues: Urease subunit beta (101 aa).

The protein belongs to the urease beta subunit family. In terms of assembly, heterotrimer of UreA (gamma), UreB (beta) and UreC (alpha) subunits. Three heterotrimers associate to form the active enzyme.

It localises to the cytoplasm. It carries out the reaction urea + 2 H2O + H(+) = hydrogencarbonate + 2 NH4(+). It participates in nitrogen metabolism; urea degradation; CO(2) and NH(3) from urea (urease route): step 1/1. This Acaryochloris marina (strain MBIC 11017) protein is Urease subunit beta.